Reading from the N-terminus, the 395-residue chain is Flap endonuclease 1 (395 aa).

The tract at residues Met1 to Lys104 is N-domain. Mg(2+) is bound at residue Asp34. Positions 47 and 70 each coordinate DNA. Mg(2+)-binding residues include Asp86, Glu158, Glu160, Asp179, and Asp181. Residues Asp122–His253 are I-domain. DNA is bound at residue Glu158. Residues Gly231 and Asp233 each contribute to the DNA site. Asp233 is a binding site for Mg(2+). The interaction with PCNA stretch occupies residues Gln341–Phe349. The segment at Lys359 to Gly395 is disordered. Residues Arg364–Ala383 are compositionally biased toward basic and acidic residues. The segment covering Lys384–Gly395 has biased composition (basic residues).

Belongs to the XPG/RAD2 endonuclease family. FEN1 subfamily. As to quaternary structure, interacts with PCNA. Three molecules of fen1 bind to one PCNA trimer with each molecule binding to one PCNA monomer. PCNA stimulates the nuclease activity without altering cleavage specificity. It depends on Mg(2+) as a cofactor. In terms of processing, phosphorylated. Phosphorylation upon DNA damage induces relocalization to the nuclear plasma.

The protein localises to the nucleus. It is found in the nucleolus. It localises to the nucleoplasm. The protein resides in the mitochondrion. Structure-specific nuclease with 5'-flap endonuclease and 5'-3' exonuclease activities involved in DNA replication and repair. During DNA replication, cleaves the 5'-overhanging flap structure that is generated by displacement synthesis when DNA polymerase encounters the 5'-end of a downstream Okazaki fragment. It enters the flap from the 5'-end and then tracks to cleave the flap base, leaving a nick for ligation. Also involved in the long patch base excision repair (LP-BER) pathway, by cleaving within the apurinic/apyrimidinic (AP) site-terminated flap. Acts as a genome stabilization factor that prevents flaps from equilibrating into structures that lead to duplications and deletions. Also possesses 5'-3' exonuclease activity on nicked or gapped double-stranded DNA, and exhibits RNase H activity. Also involved in replication and repair of rDNA and in repairing mitochondrial DNA. The sequence is that of Flap endonuclease 1 (fen1) from Pyrenophora tritici-repentis (strain Pt-1C-BFP) (Wheat tan spot fungus).